The sequence spans 79 residues: U-scoloptoxin(15)-Sm1a (79 aa).

An N-terminal signal peptide occupies residues 1-25 (MKMNVVVLSVVVLLLFIANIQQTEA).

The protein belongs to the scoloptoxin-15 family. In terms of processing, contains 2 disulfide bonds. Expressed by the venom gland.

It is found in the secreted. The polypeptide is U-scoloptoxin(15)-Sm1a (Scolopendra morsitans (Tanzanian blue ringleg centipede)).